A 694-amino-acid polypeptide reads, in one-letter code: GRB2-associated-binding protein 1 (694 aa).

An N-acetylserine modification is found at serine 2. In terms of domain architecture, PH spans 5 to 116 (EVVCSGWLRK…WVRCICDICG (112 aa)). Residues 194–203 (PEPTRTHADS) show a composition bias toward basic and acidic residues. Residues 194 to 231 (PEPTRTHADSAKSTSSETDCNDNVPSHKNPASSQSKHG) are disordered. The segment covering 204-230 (AKSTSSETDCNDNVPSHKNPASSQSKH) has biased composition (polar residues). Serine 251, serine 253, serine 266, and serine 304 each carry phosphoserine. A disordered region spans residues 309–378 (IPPTPGNTYQ…TDSSYCIPTA (70 aa)). Residues 358–374 (DTCSITRTASDTDSSYC) are compositionally biased toward polar residues. Threonine 387 is subject to Phosphothreonine. Residues serine 402 and serine 454 each carry the phosphoserine modification. Disordered stretches follow at residues 492–532 (PAHM…VKPA) and 560–656 (DSSR…ADER). Residues 594-611 (PNLSSEDSNLFGSNSLDG) are compositionally biased toward polar residues. Tyrosine 627 carries the post-translational modification Phosphotyrosine. Threonine 638 carries the post-translational modification Phosphothreonine. Position 651 is a phosphoserine (serine 651). Tyrosine 659 carries the phosphotyrosine modification. Residues 668–694 (LALKSTREAWTDGRQSTESETPAKNVK) are disordered. Residues 672–684 (STREAWTDGRQST) are compositionally biased toward basic and acidic residues. Residue serine 683 is modified to Phosphoserine. The span at 685–694 (ESETPAKNVK) shows a compositional bias: polar residues.

Belongs to the GAB family. Identified in a complex containing FRS2, GRB2, GAB1, PIK3R1 and SOS1. Forms a tripartite complex containing GAB1, METTL13 and SPRY2. Within the complex interacts with METTL13. Interacts with GRB2 and with other SH2-containing proteins. Interacts with phosphorylated LAT2. Interacts with PTPRJ. Interacts (phosphorylated) with PTPN11. Interacts with HCK. Phosphorylated in response to FGFR1 activation. Phosphorylated on tyrosine residue(s) by the epidermal growth factor receptor (EGFR) and the insulin receptor (INSR). Tyrosine phosphorylation of GAB1 mediates interaction with several proteins that contain SH2 domains. Phosphorylated on tyrosine residues by HCK upon IL6 signaling.

In terms of biological role, adapter protein that plays a role in intracellular signaling cascades triggered by activated receptor-type kinases. Plays a role in FGFR1 signaling. Probably involved in signaling by the epidermal growth factor receptor (EGFR) and the insulin receptor (INSR). Involved in the MET/HGF-signaling pathway. In Bos taurus (Bovine), this protein is GRB2-associated-binding protein 1 (GAB1).